The sequence spans 856 residues: Cyclic di-GMP phosphodiesterase PdeB (856 aa).

2 consecutive transmembrane segments (helical) span residues 7 to 27 (ILVFIVGFCLPAVVLVSYCLG) and 230 to 250 (WVSLAVILLGILIVALGYVWL). Residues 303 to 350 (QKERGKITLESIAEAVILTDIEAKVIYMNPKAETLLEVASSNAVGESL) form the PAS domain. The 134-residue stretch at 454 to 587 (RSLAVCYLDL…GTNQIHIYDD (134 aa)) folds into the GGDEF domain. The 255-residue stretch at 598–852 (APKWAVRIAQ…SYCEQFETRL (255 aa)) folds into the EAL domain.

It localises to the cell membrane. The catalysed reaction is 3',3'-c-di-GMP + H2O = 5'-phosphoguanylyl(3'-&gt;5')guanosine + H(+). Functionally, affects motility and biofilm formation, and is linked to the regulation of sulfate uptake and assimilation. This Shewanella oneidensis (strain ATCC 700550 / JCM 31522 / CIP 106686 / LMG 19005 / NCIMB 14063 / MR-1) protein is Cyclic di-GMP phosphodiesterase PdeB (pdeB).